Here is a 229-residue protein sequence, read N- to C-terminus: Lipoprotein-releasing system ATP-binding protein LolD (229 aa).

The region spanning 6–226 (LELKSVDRHY…TLSDGRVVEL (221 aa)) is the ABC transporter domain. Position 42–49 (42–49 (APSGTGKS)) interacts with ATP.

It belongs to the ABC transporter superfamily. Lipoprotein translocase (TC 3.A.1.125) family. As to quaternary structure, the complex is composed of two ATP-binding proteins (LolD) and two transmembrane proteins (LolC and LolE).

It localises to the cell inner membrane. Part of the ABC transporter complex LolCDE involved in the translocation of mature outer membrane-directed lipoproteins, from the inner membrane to the periplasmic chaperone, LolA. Responsible for the formation of the LolA-lipoprotein complex in an ATP-dependent manner. The chain is Lipoprotein-releasing system ATP-binding protein LolD from Chelativorans sp. (strain BNC1).